The primary structure comprises 921 residues: Leucine--tRNA ligase (921 aa).

A 'HIGH' region motif is present at residues 80–90; the sequence is PYPSGKLHMGH. Residues 667 to 671 carry the 'KMSKS' region motif; that stretch reads KMSKS. Lys-670 lines the ATP pocket.

It belongs to the class-I aminoacyl-tRNA synthetase family.

It localises to the cytoplasm. The enzyme catalyses tRNA(Leu) + L-leucine + ATP = L-leucyl-tRNA(Leu) + AMP + diphosphate. In Psychrobacter arcticus (strain DSM 17307 / VKM B-2377 / 273-4), this protein is Leucine--tRNA ligase.